A 125-amino-acid polypeptide reads, in one-letter code: Holo-[acyl-carrier-protein] synthase (125 aa).

Residues Asp-7 and Glu-56 each contribute to the Mg(2+) site.

It belongs to the P-Pant transferase superfamily. AcpS family. The cofactor is Mg(2+).

The protein resides in the cytoplasm. It carries out the reaction apo-[ACP] + CoA = holo-[ACP] + adenosine 3',5'-bisphosphate + H(+). In terms of biological role, transfers the 4'-phosphopantetheine moiety from coenzyme A to a Ser of acyl-carrier-protein. This chain is Holo-[acyl-carrier-protein] synthase, found in Chlamydia muridarum (strain MoPn / Nigg).